The chain runs to 715 residues: uncharacterized protein (715 aa).

4 disordered regions span residues 192-216, 300-348, 461-481, and 580-630; these read ASSVEESNRANNTSPYPPSNSSVTA, NEEV…TSKR, ASSSSFGRSHSHLGTSLRSNE, and FTVS…KPPK. Residues 202-213 are compositionally biased toward low complexity; sequence NNTSPYPPSNSS. 2 stretches are compositionally biased toward polar residues: residues 301 to 326 and 472 to 481; these read EEVSNNHARSPHSSRACNTIPSNKND and HLGTSLRSNE. Positions 601–614 are enriched in low complexity; it reads TDSSPSDTISSSPT.

This is an uncharacterized protein from Schizosaccharomyces pombe (strain 972 / ATCC 24843) (Fission yeast).